The chain runs to 350 residues: uncharacterized protein (350 aa).

Residues 1-27 form the signal peptide; sequence MKNKKRVLIASSLSCAILLLSAATTQA. The segment at 28-71 is disordered; it reads NSAHKDSQDQNKKEHVDKSQQKEKRNVTNKDKNSTVPDDIGKNG. Residues 30-60 show a composition bias toward basic and acidic residues; it reads AHKDSQDQNKKEHVDKSQQKEKRNVTNKDKN.

The protein belongs to the aerolysin family.

This is an uncharacterized protein from Staphylococcus aureus (strain MSSA476).